Reading from the N-terminus, the 345-residue chain is uncharacterized protein (345 aa).

Methionine 1 is a domain (TBDR plug). The TBDR beta-barrel domain occupies 1-345 (MDLGPIYNTR…EVILNTKIEF (345 aa)). Residues 328-345 (PVALGYAREVILNTKIEF) carry the TonB C-terminal box motif.

The protein belongs to the TonB-dependent receptor family.

The protein resides in the cell outer membrane. This is an uncharacterized protein from Haemophilus influenzae (strain ATCC 51907 / DSM 11121 / KW20 / Rd).